The following is a 417-amino-acid chain: NADH-quinone oxidoreductase subunit D (417 aa).

The protein belongs to the complex I 49 kDa subunit family. In terms of assembly, NDH-1 is composed of 14 different subunits. Subunits NuoB, C, D, E, F, and G constitute the peripheral sector of the complex.

It localises to the cell inner membrane. It catalyses the reaction a quinone + NADH + 5 H(+)(in) = a quinol + NAD(+) + 4 H(+)(out). NDH-1 shuttles electrons from NADH, via FMN and iron-sulfur (Fe-S) centers, to quinones in the respiratory chain. The immediate electron acceptor for the enzyme in this species is believed to be ubiquinone. Couples the redox reaction to proton translocation (for every two electrons transferred, four hydrogen ions are translocated across the cytoplasmic membrane), and thus conserves the redox energy in a proton gradient. The polypeptide is NADH-quinone oxidoreductase subunit D (Polynucleobacter necessarius subsp. necessarius (strain STIR1)).